The sequence spans 569 residues: Urease subunit alpha (569 aa).

Positions 131–569 (GGFDSHIHFI…LPMAQRYFLF (439 aa)) constitute a Urease domain. Ni(2+)-binding residues include histidine 136, histidine 138, and lysine 219. Lysine 219 is subject to N6-carboxylysine. Position 221 (histidine 221) interacts with substrate. Ni(2+) contacts are provided by histidine 248 and histidine 274. Histidine 322 functions as the Proton donor in the catalytic mechanism. Position 362 (aspartate 362) interacts with Ni(2+).

This sequence belongs to the metallo-dependent hydrolases superfamily. Urease alpha subunit family. As to quaternary structure, heterotrimer of UreA (gamma), UreB (beta) and UreC (alpha) subunits. Three heterotrimers associate to form the active enzyme. The cofactor is Ni cation. In terms of processing, carboxylation allows a single lysine to coordinate two nickel ions.

The protein localises to the cytoplasm. It carries out the reaction urea + 2 H2O + H(+) = hydrogencarbonate + 2 NH4(+). It functions in the pathway nitrogen metabolism; urea degradation; CO(2) and NH(3) from urea (urease route): step 1/1. This Roseobacter denitrificans (strain ATCC 33942 / OCh 114) (Erythrobacter sp. (strain OCh 114)) protein is Urease subunit alpha.